The primary structure comprises 142 residues: Large ribosomal subunit protein uL11 (142 aa).

Belongs to the universal ribosomal protein uL11 family. In terms of assembly, part of the ribosomal stalk of the 50S ribosomal subunit. Interacts with L10 and the large rRNA to form the base of the stalk. L10 forms an elongated spine to which L12 dimers bind in a sequential fashion forming a multimeric L10(L12)X complex. One or more lysine residues are methylated.

Its function is as follows. Forms part of the ribosomal stalk which helps the ribosome interact with GTP-bound translation factors. This Yersinia pestis bv. Antiqua (strain Angola) protein is Large ribosomal subunit protein uL11.